The following is a 170-amino-acid chain: Lipoprotein signal peptidase (170 aa).

The next 3 helical transmembrane spans lie at 5-25, 62-82, and 89-111; these read IVGVIAIVLVFALDQVSKAYA, SNLIFTYVSLGVILMLFVLFV, and STICMGVVIGGALGNLADRLRFG. Catalysis depends on residues D115 and D133. A helical membrane pass occupies residues 126 to 146; that stretch reads WPAFNFADVCVTCGVICFLCL.

The protein belongs to the peptidase A8 family.

The protein localises to the cell inner membrane. The catalysed reaction is Release of signal peptides from bacterial membrane prolipoproteins. Hydrolyzes -Xaa-Yaa-Zaa-|-(S,diacylglyceryl)Cys-, in which Xaa is hydrophobic (preferably Leu), and Yaa (Ala or Ser) and Zaa (Gly or Ala) have small, neutral side chains.. It functions in the pathway protein modification; lipoprotein biosynthesis (signal peptide cleavage). Its function is as follows. This protein specifically catalyzes the removal of signal peptides from prolipoproteins. The chain is Lipoprotein signal peptidase from Anaplasma marginale (strain Florida).